The following is a 396-amino-acid chain: NADH-quinone oxidoreductase subunit D 1 (396 aa).

The protein belongs to the complex I 49 kDa subunit family. As to quaternary structure, NDH-1 is composed of 14 different subunits. Subunits NuoB, C, D, E, F, and G constitute the peripheral sector of the complex.

Its subcellular location is the cell inner membrane. The catalysed reaction is a quinone + NADH + 5 H(+)(in) = a quinol + NAD(+) + 4 H(+)(out). Its function is as follows. NDH-1 shuttles electrons from NADH, via FMN and iron-sulfur (Fe-S) centers, to quinones in the respiratory chain. The immediate electron acceptor for the enzyme in this species is believed to be ubiquinone. Couples the redox reaction to proton translocation (for every two electrons transferred, four hydrogen ions are translocated across the cytoplasmic membrane), and thus conserves the redox energy in a proton gradient. The chain is NADH-quinone oxidoreductase subunit D 1 from Sinorhizobium medicae (strain WSM419) (Ensifer medicae).